A 197-amino-acid polypeptide reads, in one-letter code: uncharacterized protein (197 aa).

Residues 103 to 123 (LAIVLPVLANLIMCAMLAWYL) form a helical membrane-spanning segment.

The protein resides in the host membrane. This is an uncharacterized protein from Equus caballus (Horse).